A 947-amino-acid polypeptide reads, in one-letter code: Bifunctional glutamine synthetase adenylyltransferase/adenylyl-removing enzyme (947 aa).

The interval 1 to 440 is adenylyl removase; it reads MTPLSSPLSQ…VFNELIGDDE (440 aa). The interval 450 to 947 is adenylyl transferase; the sequence is SEPWREVWQD…ASWRKWLVAV (498 aa).

Belongs to the GlnE family. Mg(2+) serves as cofactor.

It catalyses the reaction [glutamine synthetase]-O(4)-(5'-adenylyl)-L-tyrosine + phosphate = [glutamine synthetase]-L-tyrosine + ADP. It carries out the reaction [glutamine synthetase]-L-tyrosine + ATP = [glutamine synthetase]-O(4)-(5'-adenylyl)-L-tyrosine + diphosphate. Its function is as follows. Involved in the regulation of glutamine synthetase GlnA, a key enzyme in the process to assimilate ammonia. When cellular nitrogen levels are high, the C-terminal adenylyl transferase (AT) inactivates GlnA by covalent transfer of an adenylyl group from ATP to specific tyrosine residue of GlnA, thus reducing its activity. Conversely, when nitrogen levels are low, the N-terminal adenylyl removase (AR) activates GlnA by removing the adenylyl group by phosphorolysis, increasing its activity. The regulatory region of GlnE binds the signal transduction protein PII (GlnB) which indicates the nitrogen status of the cell. This is Bifunctional glutamine synthetase adenylyltransferase/adenylyl-removing enzyme from Salmonella enteritidis PT4 (strain P125109).